The chain runs to 723 residues: FACT complex subunit Ssrp1 (723 aa).

A Phosphoserine modification is found at S443. 2 disordered regions span residues 459-564 and 586-723; these read EARE…AFML and AKKG…EASD. Composition is skewed to acidic residues over residues 464–478 and 486–507; these read EEDD…ESTD and NESD…DDSD. A compositionally biased stretch (basic residues) spans 531 to 557; the sequence is KKEKKHKEKERTKKPSKKKKDSGKPKR. The HMG box DNA-binding region spans 555–621; sequence PKRATTAFML…RYHDEMRNYK (67 aa). A compositionally biased stretch (basic and acidic residues) spans 586-621; the sequence is AKKGGEMWKELKDKSKWEDAAAKDKQRYHDEMRNYK. S628 carries the post-translational modification Phosphoserine. Residues 644–656 show a composition bias toward polar residues; sequence PSPSKKANTSGSG. S664 and S668 each carry phosphoserine. Over residues 664–676 the composition is skewed to acidic residues; that stretch reads SDDDSTSSDDEKD. Phosphothreonine is present on T669. 2 positions are modified to phosphoserine: S670 and S671. Basic and acidic residues predominate over residues 677 to 692; sequence NEPAKKKSKPPSDGDA. Residues 702–723 show a composition bias toward acidic residues; sequence EPEESEEDSNASDEDEEDEASD.

This sequence belongs to the SSRP1 family. In terms of assembly, component of the FACT complex, a stable heterodimer of dre4/spt16 and Ssrp. Interacts with CHD1 and TRL/GAGA. In terms of tissue distribution, expressed at highest levels in nurse cells of the ovary.

It is found in the nucleus. The protein resides in the chromosome. Its subcellular location is the nucleolus. Component of the FACT complex, a general chromatin factor that acts to reorganize nucleosomes. The FACT complex is involved in multiple processes that require DNA as a template such as mRNA elongation, DNA replication and DNA repair. During transcription elongation the FACT complex acts as a histone chaperone that both destabilizes and restores nucleosomal structure. It facilitates the passage of RNA polymerase II and transcription by promoting the dissociation of one histone H2A-H2B dimer from the nucleosome, then subsequently promotes the reestablishment of the nucleosome following the passage of RNA polymerase II. Binds specifically to single-stranded DNA and RNA with highest affinity for nucleotides G and U. The FACT complex is required for expression of Hox genes. The sequence is that of FACT complex subunit Ssrp1 (Ssrp) from Drosophila melanogaster (Fruit fly).